The primary structure comprises 272 residues: 3-methyl-2-oxobutanoate hydroxymethyltransferase (272 aa).

Asp54 and Asp93 together coordinate Mg(2+). 3-methyl-2-oxobutanoate is bound by residues 54-55 (DS), Asp93, and Lys121. Glu123 contacts Mg(2+). Glu190 acts as the Proton acceptor in catalysis.

This sequence belongs to the PanB family. In terms of assembly, homodecamer; pentamer of dimers. Mg(2+) serves as cofactor.

It localises to the cytoplasm. The enzyme catalyses 3-methyl-2-oxobutanoate + (6R)-5,10-methylene-5,6,7,8-tetrahydrofolate + H2O = 2-dehydropantoate + (6S)-5,6,7,8-tetrahydrofolate. It participates in cofactor biosynthesis; (R)-pantothenate biosynthesis; (R)-pantoate from 3-methyl-2-oxobutanoate: step 1/2. In terms of biological role, catalyzes the reversible reaction in which hydroxymethyl group from 5,10-methylenetetrahydrofolate is transferred onto alpha-ketoisovalerate to form ketopantoate. In Janthinobacterium sp. (strain Marseille) (Minibacterium massiliensis), this protein is 3-methyl-2-oxobutanoate hydroxymethyltransferase.